The primary structure comprises 295 residues: Glutamyl-Q tRNA(Asp) synthetase (295 aa).

Residues 6-10 and glutamate 42 each bind L-glutamate; that span reads RFAPS. The 'HIGH' region signature appears at 9–19; the sequence is PSPTGAMHLGN. Zn(2+) is bound by residues cysteine 93, cysteine 95, tyrosine 118, and cysteine 122. Positions 177 and 195 each coordinate L-glutamate. Residues 233 to 237 carry the 'KMSKS' region motif; the sequence is RLAKR. Lysine 236 contributes to the ATP binding site.

Belongs to the class-I aminoacyl-tRNA synthetase family. GluQ subfamily. Zn(2+) is required as a cofactor.

Functionally, catalyzes the tRNA-independent activation of glutamate in presence of ATP and the subsequent transfer of glutamate onto a tRNA(Asp). Glutamate is transferred on the 2-amino-5-(4,5-dihydroxy-2-cyclopenten-1-yl) moiety of the queuosine in the wobble position of the QUC anticodon. This is Glutamyl-Q tRNA(Asp) synthetase from Deinococcus radiodurans (strain ATCC 13939 / DSM 20539 / JCM 16871 / CCUG 27074 / LMG 4051 / NBRC 15346 / NCIMB 9279 / VKM B-1422 / R1).